The primary structure comprises 198 residues: Ribonuclease HII (198 aa).

The 198-residue stretch at 1 to 198 folds into the RNase H type-2 domain; the sequence is MLCGIDEAGR…QRRSFFVKNL (198 aa). 3 residues coordinate a divalent metal cation: D6, E7, and D112.

This sequence belongs to the RNase HII family. Requires Mn(2+) as cofactor. Mg(2+) serves as cofactor.

Its subcellular location is the cytoplasm. It catalyses the reaction Endonucleolytic cleavage to 5'-phosphomonoester.. Endonuclease that specifically degrades the RNA of RNA-DNA hybrids. This chain is Ribonuclease HII, found in Treponema denticola (strain ATCC 35405 / DSM 14222 / CIP 103919 / JCM 8153 / KCTC 15104).